A 394-amino-acid chain; its full sequence is NAD(P)H-quinone oxidoreductase subunit H (394 aa).

Belongs to the complex I 49 kDa subunit family. As to quaternary structure, NDH-1 can be composed of about 15 different subunits; different subcomplexes with different compositions have been identified which probably have different functions.

Its subcellular location is the cellular thylakoid membrane. It carries out the reaction a plastoquinone + NADH + (n+1) H(+)(in) = a plastoquinol + NAD(+) + n H(+)(out). It catalyses the reaction a plastoquinone + NADPH + (n+1) H(+)(in) = a plastoquinol + NADP(+) + n H(+)(out). NDH-1 shuttles electrons from an unknown electron donor, via FMN and iron-sulfur (Fe-S) centers, to quinones in the respiratory and/or the photosynthetic chain. The immediate electron acceptor for the enzyme in this species is believed to be plastoquinone. Couples the redox reaction to proton translocation, and thus conserves the redox energy in a proton gradient. Cyanobacterial NDH-1 also plays a role in inorganic carbon-concentration. The polypeptide is NAD(P)H-quinone oxidoreductase subunit H (Picosynechococcus sp. (strain ATCC 27264 / PCC 7002 / PR-6) (Agmenellum quadruplicatum)).